The following is a 689-amino-acid chain: Glycine--tRNA ligase beta subunit (689 aa).

This sequence belongs to the class-II aminoacyl-tRNA synthetase family. As to quaternary structure, tetramer of two alpha and two beta subunits.

Its subcellular location is the cytoplasm. The catalysed reaction is tRNA(Gly) + glycine + ATP = glycyl-tRNA(Gly) + AMP + diphosphate. This is Glycine--tRNA ligase beta subunit from Enterobacter sp. (strain 638).